The following is a 123-amino-acid chain: Histone H2B (123 aa).

The segment at 1–32 (MAPKAPGKGAKKAAKSKAPRAPGDRKRKRTRR) is disordered. Residues 9-18 (GAKKAAKSKA) are compositionally biased toward basic residues. Ser110 carries O-linked (GlcNAc) serine glycosylation. Lys118 participates in a covalent cross-link: Glycyl lysine isopeptide (Lys-Gly) (interchain with G-Cter in ubiquitin).

Belongs to the histone H2B family. The nucleosome is a histone octamer containing two molecules each of H2A, H2B, H3 and H4 assembled in one H3-H4 heterotetramer and two H2A-H2B heterodimers. The octamer wraps approximately 147 bp of DNA. Post-translationally, monoubiquitination of Lys-118 gives a specific tag for epigenetic transcriptional activation and is also prerequisite for histone H3 'Lys-4' and 'Lys-79' methylation. GlcNAcylation at Ser-110 promotes monoubiquitination of Lys-118. It fluctuates in response to extracellular glucose, and associates with transcribed genes.

Its subcellular location is the nucleus. The protein localises to the chromosome. Its function is as follows. Core component of nucleosome. Nucleosomes wrap and compact DNA into chromatin, limiting DNA accessibility to the cellular machineries which require DNA as a template. Histones thereby play a central role in transcription regulation, DNA repair, DNA replication and chromosomal stability. DNA accessibility is regulated via a complex set of post-translational modifications of histones, also called histone code, and nucleosome remodeling. This chain is Histone H2B, found in Holothuria tubulosa (Tubular sea cucumber).